A 279-amino-acid chain; its full sequence is Probable diacylglycerol pyrophosphate phosphatase 1 (279 aa).

Over 1-17 the chain is Lumenal; that stretch reads MEAVGKHVKLFWNVYSD. Residues 18–38 traverse the membrane as a helical segment; it reads YAVLIAISLSYFVFDVLMLPF. The Cytoplasmic portion of the chain corresponds to 39 to 58; sequence TRQFSLEDITISHPFALHEQ. A helical transmembrane segment spans residues 59-79; it reads VPTKYLGIICVFFPALVLYGF. The Lumenal portion of the chain corresponds to 80-86; the sequence is GKLRNNS. The helical transmembrane segment at 87–107 threads the bilayer; it reads LLFWKSLMGLLYSTMVCGLCV. Residues 108-163 lie on the Cytoplasmic side of the membrane; that stretch reads SLLKNAVGRPRPDFLARCQPFESTPKTGLVDVLSCSVPWSDKVLQDGFRSFPSGHT. The phosphatase sequence motif I stretch occupies residues 111-119; the sequence is KNAVGRPRP. The phosphatase sequence motif II stretch occupies residues 159–162; sequence PSGH. Residues 164-184 traverse the membrane as a helical segment; it reads SFSFAGLGFLAIFLAGQLKMF. The Lumenal portion of the chain corresponds to 185 to 187; sequence RNK. The chain crosses the membrane as a helical span at residues 188–208; that stretch reads TSSWKVVVPLVPLSIASWIGL. Over 209 to 220 the chain is Cytoplasmic; it reads SRSQDYRHHKED. Residues 209–220 form a phosphatase sequence motif III region; that stretch reads SRSQDYRHHKED. The chain crosses the membrane as a helical span at residues 221–241; the sequence is IAVGALFGFAIAYVVYRQLFP. The Lumenal segment spans residues 242–279; it reads PLDHHNADILYVQAELDEGYTNVHSAGNSSATNAEQMV.

This sequence belongs to the PA-phosphatase related phosphoesterase family.

It is found in the vacuole membrane. The protein localises to the endoplasmic reticulum membrane. It catalyses the reaction a 1,2-diacyl-sn-glycerol 3-diphosphate + H2O = a 1,2-diacyl-sn-glycero-3-phosphate + phosphate + H(+). The catalysed reaction is a 1,2-diacyl-sn-glycero-3-phosphate + H2O = a 1,2-diacyl-sn-glycerol + phosphate. In terms of biological role, catalyzes the dephosphorylation of diacylglycerol phosphate (DGPP) to phosphatidate (PA) and the subsequent dephosphorylation of PA to diacylglycerol (DAG). This Schizosaccharomyces pombe (strain 972 / ATCC 24843) (Fission yeast) protein is Probable diacylglycerol pyrophosphate phosphatase 1 (dpp1).